We begin with the raw amino-acid sequence, 420 residues long: Protein disulfide isomerase CRELD1 (420 aa).

Residues 1–29 (MAPWPPKGLVPAMLWGLSLFLNLPGPIWL) form the signal peptide. Topologically, residues 30–362 (QPSPPPQSSP…GFFSEMTEDE (333 aa)) are extracellular. The CXXC signature appears at 46 to 49 (CHTC). C46 and C49 form a disulfide bridge. N-linked (GlcNAc...) asparagine glycosylation occurs at N79. Residues 153–193 (LPCPGGTERPCGGYGQCEGEGTRGGSGHCDCQAGYGGEACG) form the EGF-like 1 domain. Disulfide bonds link C155-C169, C163-C181, and C183-C192. Residue N205 is glycosylated (N-linked (GlcNAc...) asparagine). FU repeat units follow at residues 208 to 256 (HLVC…GANC) and 268 to 315 (SYEC…EVCP). The CXXC motif lies at 278-281 (CLGC). Cystine bridges form between C278–C281, C309–C321, C314–C330, and C332–C343. The EGF-like 2; calcium-binding domain maps to 305-344 (DVDECETEVCPGENKQCENTEGGYRCICAEGYKQMEGICV). The chain crosses the membrane as a helical span at residues 363–383 (LVVLQQMFFGIIICALATLAA). Position 384 (K384) is a topological domain, cytoplasmic. Residues 385 to 405 (GDLVFTAIFIGAVAAMTGYWL) traverse the membrane as a helical segment. Over 406–420 (SERSDRVLEGFIKGR) the chain is Extracellular.

The protein belongs to the CRELD family. Highly expressed in fetal lung, liver, kidney, adult heart, brain and skeletal muscle. Weakly expressed in placenta, fetal brain, and adult lung, liver, kidney and pancreas.

The protein localises to the membrane. The enzyme catalyses Catalyzes the rearrangement of -S-S- bonds in proteins.. Protein disulfide isomerase. Promotes the localization of acetylcholine receptors (AChRs) to the plasma membrane. This Homo sapiens (Human) protein is Protein disulfide isomerase CRELD1 (CRELD1).